A 519-amino-acid polypeptide reads, in one-letter code: NADH-quinone oxidoreductase subunit C/D (519 aa).

An NADH dehydrogenase I subunit C region spans residues 1–138; that stretch reads MSERIEIPAE…TNEEPVDTTQ (138 aa). An NADH dehydrogenase I subunit D region spans residues 159–519; sequence DEYIINIGPQ…VDYVVPDIDR (361 aa).

It in the N-terminal section; belongs to the complex I 30 kDa subunit family. The protein in the C-terminal section; belongs to the complex I 49 kDa subunit family. NDH-1 is composed of 13 different subunits. Subunits NuoB, CD, E, F, and G constitute the peripheral sector of the complex.

The protein localises to the cell inner membrane. It catalyses the reaction a quinone + NADH + 5 H(+)(in) = a quinol + NAD(+) + 4 H(+)(out). Its function is as follows. NDH-1 shuttles electrons from NADH, via FMN and iron-sulfur (Fe-S) centers, to quinones in the respiratory chain. The immediate electron acceptor for the enzyme in this species is believed to be a menaquinone. Couples the redox reaction to proton translocation (for every two electrons transferred, four hydrogen ions are translocated across the cytoplasmic membrane), and thus conserves the redox energy in a proton gradient. The sequence is that of NADH-quinone oxidoreductase subunit C/D from Phocaeicola vulgatus (strain ATCC 8482 / DSM 1447 / JCM 5826 / CCUG 4940 / NBRC 14291 / NCTC 11154) (Bacteroides vulgatus).